We begin with the raw amino-acid sequence, 96 residues long: ATP-dependent Clp protease adapter protein ClpS (96 aa).

Belongs to the ClpS family. Binds to the N-terminal domain of the chaperone ClpA.

Involved in the modulation of the specificity of the ClpAP-mediated ATP-dependent protein degradation. In Campylobacter jejuni subsp. doylei (strain ATCC BAA-1458 / RM4099 / 269.97), this protein is ATP-dependent Clp protease adapter protein ClpS.